The primary structure comprises 275 residues: Protein unc-50 homolog (275 aa).

Residues 1 to 26 (MTQYSHVKYTQSPTPSVVSGYSSASR) are compositionally biased toward polar residues. The disordered stretch occupies residues 1 to 39 (MTQYSHVKYTQSPTPSVVSGYSSASRLHSPLPPPANHRR). The Cytoplasmic segment spans residues 1-99 (MTQYSHVKYT…TKSQFARDDP (99 aa)). A helical transmembrane segment spans residues 100 to 120 (AFLVLLVVCLCVTSLGFAYVL). Topologically, residues 121 to 129 (GLSFWQSIS) are lumenal. Residues 130–150 (FIFYVVFVDCIFVGIIIASFF) traverse the membrane as a helical segment. Residues 151–178 (WAVTNRYLRTNSLEPDIEWGYAFDVHLN) lie on the Cytoplasmic side of the membrane. The chain crosses the membrane as a helical span at residues 179 to 199 (AFFPPLMLLHFIQLFFYNWLI). Over 200-207 (SQTWFISR) the chain is Lumenal. A helical membrane pass occupies residues 208–228 (FLGNTFWLMGMGYYVYITFLG). Over 229–239 (YNCIPHLKNTR) the chain is Cytoplasmic. The helical transmembrane segment at 240-260 (IILIALPIIFLLFLVVTIIGW) threads the bilayer. Residues 261-275 (NATISFVNFYKYRVY) are Lumenal-facing.

This sequence belongs to the unc-50 family.

The protein localises to the golgi apparatus membrane. Required for cell surface expression of acetylcholine receptors. This Drosophila melanogaster (Fruit fly) protein is Protein unc-50 homolog.